Consider the following 639-residue polypeptide: NADP-dependent malic enzyme, chloroplastic (639 aa).

Residues 1–49 constitute a chloroplast transit peptide; that stretch reads MLSARAAATAAAAAASPLWKRGEGGSSGSGSGCTSCREVRRRAAAVRVR. A disordered region spans residues 15–34; that stretch reads ASPLWKRGEGGSSGSGSGCT. Tyr187 (proton donor) is an active-site residue. Arg240 contributes to the NAD(+) binding site. Lys258 acts as the Proton acceptor in catalysis. A divalent metal cation is bound by residues Glu330, Asp331, and Asp354. Residue Asp354 coordinates NAD(+). 383-399 contributes to the NADP(+) binding site; it reads LFLGAGEAGTGIAELIA. Asn495 serves as a coordination point for NAD(+).

It belongs to the malic enzymes family. In terms of assembly, homotetramer. Mg(2+) is required as a cofactor. Mn(2+) serves as cofactor.

It is found in the plastid. Its subcellular location is the chloroplast. The catalysed reaction is (S)-malate + NADP(+) = pyruvate + CO2 + NADPH. It catalyses the reaction oxaloacetate + H(+) = pyruvate + CO2. Its pathway is photosynthesis; C4 acid pathway. In terms of biological role, the chloroplastic ME isoform decarboxylates malate shuttled from neighboring mesophyll cells. The CO(2) released is then refixed by ribulose-bisphosphate carboxylase. This pathway eliminates the photorespiratory loss of CO(2) that occurs in most plants. This Oryza sativa subsp. japonica (Rice) protein is NADP-dependent malic enzyme, chloroplastic (ME6).